Here is a 209-residue protein sequence, read N- to C-terminus: MNDPSCSSADETAHPGRLVIISGPSGAGKSTVVKQLMKRCDVPLQLSVSATTREPRPGEIHGQDYFFLSHEEFERRRKLNDFVECKQVFSMGQWYGTLKDQVATGLNAGKWVILEIDVQGAMAVLDDPHYRPVTIFVHPGSMEELERRLRNRGTESESSLTARLETAAAEMQCLSRYQYEIINESVDNAVTEICQILLDQRKTTPCSKN.

A Guanylate kinase-like domain is found at 16–198; the sequence is GRLVIISGPS…AVTEICQILL (183 aa). Residue 23–30 participates in ATP binding; it reads GPSGAGKS.

It belongs to the guanylate kinase family.

It localises to the cytoplasm. It carries out the reaction GMP + ATP = GDP + ADP. Functionally, essential for recycling GMP and indirectly, cGMP. The protein is Guanylate kinase of Rhodopirellula baltica (strain DSM 10527 / NCIMB 13988 / SH1).